Reading from the N-terminus, the 139-residue chain is MKFQLLTLVSIATTTLAINLEQVRLINDDELMVQDAQFDYPAIVNLKDQDAEIAKKTITSSSSTTTTTTAKKDKKTTSTTSASSTTTTSTKSNSTSPSSSSSKKHKSETASITKTGGADSVAAAAAVGGPILAALALLL.

An N-terminal signal peptide occupies residues 1–17 (MKFQLLTLVSIATTTLA). 2 stretches are compositionally biased toward low complexity: residues 57 to 69 (TITS…TTTT) and 77 to 101 (TSTT…SSSS). The interval 57 to 115 (TITSSSSTTTTTTAKKDKKTTSTTSASSTTTTSTKSNSTSPSSSSSKKHKSETASITKT) is disordered. N-linked (GlcNAc...) asparagine glycosylation is present at Asn-93. The GPI-anchor amidated glycine moiety is linked to residue Gly-116. Positions 117-139 (GADSVAAAAAVGGPILAALALLL) are cleaved as a propeptide — removed in mature form.

Its subcellular location is the cell membrane. This chain is GPI-anchored protein 53 (PGA53), found in Candida albicans (strain SC5314 / ATCC MYA-2876) (Yeast).